A 598-amino-acid polypeptide reads, in one-letter code: 2-succinyl-5-enolpyruvyl-6-hydroxy-3-cyclohexene-1-carboxylate synthase (598 aa).

This sequence belongs to the TPP enzyme family. MenD subfamily. Homodimer. Requires Mg(2+) as cofactor. It depends on Mn(2+) as a cofactor. The cofactor is thiamine diphosphate.

The catalysed reaction is isochorismate + 2-oxoglutarate + H(+) = 5-enolpyruvoyl-6-hydroxy-2-succinyl-cyclohex-3-ene-1-carboxylate + CO2. It participates in quinol/quinone metabolism; 1,4-dihydroxy-2-naphthoate biosynthesis; 1,4-dihydroxy-2-naphthoate from chorismate: step 2/7. Its pathway is cofactor biosynthesis; phylloquinone biosynthesis. In terms of biological role, catalyzes the thiamine diphosphate-dependent decarboxylation of 2-oxoglutarate and the subsequent addition of the resulting succinic semialdehyde-thiamine pyrophosphate anion to isochorismate to yield 2-succinyl-5-enolpyruvyl-6-hydroxy-3-cyclohexene-1-carboxylate (SEPHCHC). This is 2-succinyl-5-enolpyruvyl-6-hydroxy-3-cyclohexene-1-carboxylate synthase from Prochlorococcus marinus (strain NATL2A).